Here is a 297-residue protein sequence, read N- to C-terminus: 33 kDa chaperonin (297 aa).

2 disulfide bridges follow: Cys232–Cys234 and Cys266–Cys269.

The protein belongs to the HSP33 family. In terms of processing, under oxidizing conditions two disulfide bonds are formed involving the reactive cysteines. Under reducing conditions zinc is bound to the reactive cysteines and the protein is inactive.

The protein resides in the cytoplasm. Its function is as follows. Redox regulated molecular chaperone. Protects both thermally unfolding and oxidatively damaged proteins from irreversible aggregation. Plays an important role in the bacterial defense system toward oxidative stress. The sequence is that of 33 kDa chaperonin from Pseudomonas aeruginosa (strain UCBPP-PA14).